The primary structure comprises 357 residues: Probable dual-specificity RNA methyltransferase RlmN (357 aa).

Glutamate 92 serves as the catalytic Proton acceptor. In terms of domain architecture, Radical SAM core spans 98 to 336 (HKYGLSVCVT…CGVRLEHGTD (239 aa)). A disulfide bridge links cysteine 105 with cysteine 341. The [4Fe-4S] cluster site is built by cysteine 112, cysteine 116, and cysteine 119. Residues 164-165 (GE), serine 196, 219-221 (SLH), and asparagine 297 each bind S-adenosyl-L-methionine. Cysteine 341 acts as the S-methylcysteine intermediate in catalysis.

Belongs to the radical SAM superfamily. RlmN family. The cofactor is [4Fe-4S] cluster.

Its subcellular location is the cytoplasm. The catalysed reaction is adenosine(2503) in 23S rRNA + 2 reduced [2Fe-2S]-[ferredoxin] + 2 S-adenosyl-L-methionine = 2-methyladenosine(2503) in 23S rRNA + 5'-deoxyadenosine + L-methionine + 2 oxidized [2Fe-2S]-[ferredoxin] + S-adenosyl-L-homocysteine. The enzyme catalyses adenosine(37) in tRNA + 2 reduced [2Fe-2S]-[ferredoxin] + 2 S-adenosyl-L-methionine = 2-methyladenosine(37) in tRNA + 5'-deoxyadenosine + L-methionine + 2 oxidized [2Fe-2S]-[ferredoxin] + S-adenosyl-L-homocysteine. Functionally, specifically methylates position 2 of adenine 2503 in 23S rRNA and position 2 of adenine 37 in tRNAs. The sequence is that of Probable dual-specificity RNA methyltransferase RlmN from Exiguobacterium sibiricum (strain DSM 17290 / CCUG 55495 / CIP 109462 / JCM 13490 / 255-15).